The chain runs to 283 residues: Probable endonuclease 4 (283 aa).

Zn(2+) contacts are provided by H67, H107, E144, D178, H181, H215, D228, H230, and E260.

It belongs to the AP endonuclease 2 family. Zn(2+) is required as a cofactor.

The enzyme catalyses Endonucleolytic cleavage to 5'-phosphooligonucleotide end-products.. Endonuclease IV plays a role in DNA repair. It cleaves phosphodiester bonds at apurinic or apyrimidinic (AP) sites, generating a 3'-hydroxyl group and a 5'-terminal sugar phosphate. The protein is Probable endonuclease 4 of Geobacter sp. (strain M21).